Here is a 146-residue protein sequence, read N- to C-terminus: Hemoglobin subunit beta (146 aa).

N-acetylvaline is present on Val-1. In terms of domain architecture, Globin spans 2–146 (HLTAEEKSAV…VANALAHKYH (145 aa)). Thr-12 is subject to Phosphothreonine. An N6-acetyllysine modification is found at Lys-59. His-63 is a heme b binding site. Lys-82 carries the N6-acetyllysine modification. His-92 contacts heme b. The residue at position 93 (Cys-93) is an S-nitrosocysteine. At Lys-144 the chain carries N6-acetyllysine.

This sequence belongs to the globin family. As to quaternary structure, heterotetramer of two alpha chains and two beta chains. Red blood cells.

Involved in oxygen transport from the lung to the various peripheral tissues. This Balaenoptera acutorostrata (Common minke whale) protein is Hemoglobin subunit beta (HBB).